The following is a 473-amino-acid chain: FAD-dependent monooxygeanse terM (473 aa).

The first 22 residues, 1–22 (MSENFKVLIIGGSVAGLTLALC), serve as a signal peptide directing secretion. FAD-binding residues include E34, G48, R107, D303, and A316. Residues 441–461 (VLYLICGALLAWWASGLVWHF) traverse the membrane as a helical segment.

It belongs to the paxM FAD-dependent monooxygenase family. It depends on FAD as a cofactor.

It is found in the membrane. It participates in secondary metabolite biosynthesis. In terms of biological role, FAD-dependent monooxygeanse; part of the gene cluster that mediates the biosynthesis of terpendoles, indole-diterpene (IDT) mycotoxins including terpendole I, terpendole K, terpendole C, as well as the kinesin Eg5 inhibitor terpendole E. Terpendoles biosynthesis begins with the synthesis of geranylgeranyl diphosphate (GGPP) by a yet unidentified GGPP synthase. Condensation of indole-3-glycerol phosphate with GGPP by the prenyltransferase terC then forms 3-geranylgeranylindole (3-GGI), followed by epoxidation and cyclization of this intermediate (by the FAD-dependent monooxygeanse terM and the terpene cyclase terB) to form paspaline. The cytochrome monooxygenase terQ then hydroxylates paspalline at C-11 to yield terpendole E. The cytochrome monooxygenase terP converts terpendole E to 13-desoxyterpendole I, and terQ converts 13-desoxyterpendole I into terpendole I. TerF and terK are required for conversion of terpendole I to terpendole C which is further converted to terpendole K. The polypeptide is FAD-dependent monooxygeanse terM (Tolypocladium album (Soil fungus)).